Here is a 103-residue protein sequence, read N- to C-terminus: Matrix Gla protein (103 aa).

The N-terminal stretch at 1 to 19 (MKSLLLLSILAALAVAALC) is a signal peptide. Glu21 is subject to 4-carboxyglutamate; partial. Phosphoserine occurs at positions 22, 25, and 28. The region spanning 51 to 97 (RAKAQERIRELNKPQYELNREACDDFKLCERYAMVYGYNAAYDRYFR) is the Gla domain. Glu56, Glu60, Glu67, and Glu71 each carry 4-carboxyglutamate. Cys73 and Cys79 form a disulfide bridge. A propeptide spans 99 to 102 (RRGA) (removed in short form; probably by carboxypeptidase N). Lys103 is a propeptide (removed in long form; probably by carboxypeptidase H).

This sequence belongs to the osteocalcin/matrix Gla protein family. Requires vitamin K-dependent gamma-carboxylation for its function.

Its subcellular location is the secreted. Functionally, associates with the organic matrix of bone and cartilage. Thought to act as an inhibitor of bone formation. The sequence is that of Matrix Gla protein (MGP) from Bos taurus (Bovine).